A 100-amino-acid polypeptide reads, in one-letter code: Probable DNA-binding protein HU (100 aa).

Belongs to the bacterial histone-like protein family.

Histone-like DNA-binding protein which is capable of wrapping DNA to stabilize it, and thus to prevent its denaturation under extreme environmental conditions. The chain is Probable DNA-binding protein HU (hup) from Chlamydia pneumoniae (Chlamydophila pneumoniae).